The following is a 275-amino-acid chain: Large ribosomal subunit protein uL2 (275 aa).

Positions 223 to 275 are disordered; it reads VAMNPVDHPHGGGEGRTGEAREPVSPWGTPSKGFKTRRNKRTNNMIVQRRKRK. The span at 229-244 shows a compositional bias: basic and acidic residues; the sequence is DHPHGGGEGRTGEARE.

Belongs to the universal ribosomal protein uL2 family. As to quaternary structure, part of the 50S ribosomal subunit. Forms a bridge to the 30S subunit in the 70S ribosome.

In terms of biological role, one of the primary rRNA binding proteins. Required for association of the 30S and 50S subunits to form the 70S ribosome, for tRNA binding and peptide bond formation. It has been suggested to have peptidyltransferase activity; this is somewhat controversial. Makes several contacts with the 16S rRNA in the 70S ribosome. The sequence is that of Large ribosomal subunit protein uL2 from Bordetella petrii (strain ATCC BAA-461 / DSM 12804 / CCUG 43448).